We begin with the raw amino-acid sequence, 166 residues long: UPF0304 protein VFMJ11_1926 (166 aa).

This sequence belongs to the UPF0304 family.

This chain is UPF0304 protein VFMJ11_1926, found in Aliivibrio fischeri (strain MJ11) (Vibrio fischeri).